We begin with the raw amino-acid sequence, 556 residues long: Genetic interactor of prohibitins 3, mitochondrial (556 aa).

A mitochondrion-targeting transit peptide spans 1–21 (MLNLCHALRGVRQFSCSVIVK). Residues 113–305 (ESTLNDILNY…LFDLPGYSTS (193 aa)) form the CP-type G domain.

This sequence belongs to the TRAFAC class YlqF/YawG GTPase family. GEP3 subfamily.

The protein resides in the mitochondrion. In terms of biological role, interacts genetically with prohibitins and thus may be involved in the mitochondrial lipid metabolism. The protein is Genetic interactor of prohibitins 3, mitochondrial (GEP3) of Saccharomyces cerevisiae (strain Lalvin EC1118 / Prise de mousse) (Baker's yeast).